The following is a 623-amino-acid chain: E3 ubiquitin-protein ligase DTX1 (623 aa).

2 WWE domains span residues 13-93 (HNFG…PVRR) and 94-170 (NFFE…RLRR). A disordered region spans residues 224–319 (KVPSGPPPAL…RASIPPGVPA (96 aa)). Residues 227 to 242 (SGPPPALPPPPPPPIH) are compositionally biased toward pro residues. Positions 292–311 (GQNNLNRPGEQRTSGSSSRA) are enriched in polar residues. An RING-type zinc finger spans residues 413-474 (CTICMERLVT…DGSLQCPTCK (62 aa)).

Belongs to the Deltex family. May form a homo- or heterodimer with other members of the Deltex family. Probably interacts with Notch1. Specifically expressed in regions undergoing neuronal differentiation. Mainly colocalizes with Notch1.

It catalyses the reaction S-ubiquitinyl-[E2 ubiquitin-conjugating enzyme]-L-cysteine + [acceptor protein]-L-lysine = [E2 ubiquitin-conjugating enzyme]-L-cysteine + N(6)-ubiquitinyl-[acceptor protein]-L-lysine.. It functions in the pathway protein modification; protein ubiquitination. In terms of biological role, regulator of Notch signaling, a signaling pathway involved in cell-cell communications that regulates a broad spectrum of cell-fate determinations. Probably acts both as a positive and negative regulator of Notch, depending on the developmental and cell context. Functions as a ubiquitin ligase protein in vivo, mediating ubiquitination and promoting degradation of MEKK1, suggesting that it may regulate the Notch pathway via some ubiquitin ligase activity. This chain is E3 ubiquitin-protein ligase DTX1 (dtx1), found in Xenopus laevis (African clawed frog).